The primary structure comprises 240 residues: Probable transcriptional regulatory protein jhp_0149 (240 aa).

The protein belongs to the TACO1 family.

It is found in the cytoplasm. The sequence is that of Probable transcriptional regulatory protein jhp_0149 from Helicobacter pylori (strain J99 / ATCC 700824) (Campylobacter pylori J99).